Here is a 382-residue protein sequence, read N- to C-terminus: Lipid-A-disaccharide synthase (382 aa).

This sequence belongs to the LpxB family.

The catalysed reaction is a lipid X + a UDP-2-N,3-O-bis[(3R)-3-hydroxyacyl]-alpha-D-glucosamine = a lipid A disaccharide + UDP + H(+). It functions in the pathway bacterial outer membrane biogenesis; LPS lipid A biosynthesis. Functionally, condensation of UDP-2,3-diacylglucosamine and 2,3-diacylglucosamine-1-phosphate to form lipid A disaccharide, a precursor of lipid A, a phosphorylated glycolipid that anchors the lipopolysaccharide to the outer membrane of the cell. This chain is Lipid-A-disaccharide synthase, found in Dechloromonas aromatica (strain RCB).